The sequence spans 240 residues: Uridylate kinase (240 aa).

ATP is bound at residue 14 to 17; it reads KLSG. Residue glycine 56 coordinates UMP. ATP is bound by residues glycine 57 and arginine 61. UMP is bound by residues aspartate 76 and 137–144; that span reads TGNPFFTT. ATP-binding residues include threonine 164, tyrosine 170, and aspartate 173.

The protein belongs to the UMP kinase family. In terms of assembly, homohexamer.

The protein resides in the cytoplasm. The catalysed reaction is UMP + ATP = UDP + ADP. The protein operates within pyrimidine metabolism; CTP biosynthesis via de novo pathway; UDP from UMP (UMPK route): step 1/1. Its activity is regulated as follows. Inhibited by UTP. Catalyzes the reversible phosphorylation of UMP to UDP. This Albidiferax ferrireducens (strain ATCC BAA-621 / DSM 15236 / T118) (Rhodoferax ferrireducens) protein is Uridylate kinase.